A 548-amino-acid chain; its full sequence is MAAKDVKFGNDARVKMLRGVNVLADAVKVTLGPKGRNVVLDKSFGAPTITKDGVSVAREIELEDKFENMGAQMVKEVASKANDTAGDGTTTATVLAQAIITEGLKAVAAGMNPMDLKRGIDKAVTAAVEELKALSVPCSDSKAIAQVGTISANSDETVGKLIAEAMDKVGKEGVITVEDGTGLQDELDVVEGMQFDRGYLSPYFINKPETGAVELESPFILLADKKISNIREMLPVLEAVAKAGKPLLIIAEDVEGEALATLVVNTMRGIVKVAAVKAPGFGDRRKAMLQDIATLTGGTVISEEIGMELEKATLEDLGQAKRVVINKDTTTIIDGVGEEAAIQGRVAQIRQQIEEATSDYDREKLQERVAKLAGGVAVIKVGAATEVEMKEKKARVEDALHATRAAVEEGVVAGGGVALIRVASKLADLRGQNEEQNVGIKVALRAMEAPLRQIVLNCGEEPSVVANTVKAGDGNYGYNAATEEYGNMIDMGILDPTKVTRSALQYAASVAGLMITTECMVTDLPKNDAADLGAAGGMGGMGGMGGMM.

ATP-binding positions include 30–33 (TLGP), lysine 51, 87–91 (DGTTT), glycine 415, 479–481 (NAA), and aspartate 495.

This sequence belongs to the chaperonin (HSP60) family. In terms of assembly, forms a cylinder of 14 subunits composed of two heptameric rings stacked back-to-back. Interacts with the co-chaperonin GroES.

Its subcellular location is the cytoplasm. The enzyme catalyses ATP + H2O + a folded polypeptide = ADP + phosphate + an unfolded polypeptide.. Its function is as follows. Together with its co-chaperonin GroES, plays an essential role in assisting protein folding. The GroEL-GroES system forms a nano-cage that allows encapsulation of the non-native substrate proteins and provides a physical environment optimized to promote and accelerate protein folding. The sequence is that of Chaperonin GroEL from Escherichia fergusonii (strain ATCC 35469 / DSM 13698 / CCUG 18766 / IAM 14443 / JCM 21226 / LMG 7866 / NBRC 102419 / NCTC 12128 / CDC 0568-73).